A 352-amino-acid polypeptide reads, in one-letter code: Phosphoribosylformylglycinamidine cyclo-ligase (352 aa).

The protein belongs to the AIR synthase family.

The protein resides in the cytoplasm. The enzyme catalyses 2-formamido-N(1)-(5-O-phospho-beta-D-ribosyl)acetamidine + ATP = 5-amino-1-(5-phospho-beta-D-ribosyl)imidazole + ADP + phosphate + H(+). It participates in purine metabolism; IMP biosynthesis via de novo pathway; 5-amino-1-(5-phospho-D-ribosyl)imidazole from N(2)-formyl-N(1)-(5-phospho-D-ribosyl)glycinamide: step 2/2. This Pseudomonas fluorescens (strain ATCC BAA-477 / NRRL B-23932 / Pf-5) protein is Phosphoribosylformylglycinamidine cyclo-ligase.